Reading from the N-terminus, the 476-residue chain is Protein transport protein Sec61 subunit alpha isoform 1 (476 aa).

Over 2–28 the chain is Cytoplasmic; the sequence is AIKFLEVIKPFCVILPEIQKPERKIQF. Residues 29–46 form a helical membrane-spanning segment; the sequence is KEKVLWTAITLFIFLVCC. Topologically, residues 47-80 are lumenal; sequence QIPLFGIMSSDSADPFYWMRVILASNRGTLMELG. A helical membrane pass occupies residues 81–97; that stretch reads ISPIVTSGLIMQLLAGA. At 98 to 109 the chain is on the cytoplasmic side; it reads KIIEVGDTPKDR. The chain crosses the membrane as a helical span at residues 110 to 131; it reads ALFNGAQKLFGMIITIGQSIVY. Residues 132 to 148 are Lumenal-facing; the sequence is VMTGMYGDPSEMGAGIC. The chain crosses the membrane as a helical span at residues 149–167; sequence LLITIQLFVAGLIVLLLDE. The Cytoplasmic portion of the chain corresponds to 168–177; it reads LLQKGYGLGS. The helical transmembrane segment at 178–196 threads the bilayer; sequence GISLFIATNICETIVWKAF. Residues 197 to 241 lie on the Lumenal side of the membrane; that stretch reads SPTTVNTGRGMEFEGAIIALFHLLATRTDKVRALREAFYRQNLPN. Residues 242–259 traverse the membrane as a helical segment; it reads LMNLIATIFVFAVVIYFQ. Over 260–285 the chain is Cytoplasmic; the sequence is GFRVDLPIKSARYRGQYNTYPIKLFY. Residues 286–306 form a helical membrane-spanning segment; that stretch reads TSNIPIILQSALVSNLYVISQ. The Lumenal portion of the chain corresponds to 307 to 356; sequence MLSARFSGNLLVSLLGTWSDTSSGGPARAYPVGGLCHYLSPPESFGSVLE. The chain crosses the membrane as a helical span at residues 357-379; sequence DPVHAVVYIVFMLGSCAFFSKTW. Over 380-420 the chain is Cytoplasmic; the sequence is IEVSGSSAKDVAKQLKEQQMVMRGHRETSMVHELNRYIPTA. The chain crosses the membrane as a helical span at residues 421–437; the sequence is AAFGGLCIGALSVLADF. The Lumenal segment spans residues 438–443; sequence LGAIGS. A helical membrane pass occupies residues 444–458; sequence GTGILLAVTIIYQYF. At 459 to 476 the chain is on the cytoplasmic side; it reads EIFVKEQSEVGSMGALLF.

This sequence belongs to the SecY/SEC61-alpha family. The SEC61 channel-forming translocon complex consists of channel-forming core components SEC61A1, SEC61B and SEC61G and different auxiliary components such as SEC62 and SEC63. The SEC61 channel associates with the multi-pass translocon (MPT) complex.

The protein resides in the endoplasmic reticulum membrane. In terms of biological role, component of SEC61 channel-forming translocon complex that mediates transport of signal peptide-containing precursor polypeptides across the endoplasmic reticulum (ER). Forms a ribosome receptor and a gated pore in the ER membrane, both functions required for cotranslational translocation of nascent polypeptides. May cooperate with auxiliary protein SEC62, SEC63 and HSPA5/BiP to enable post-translational transport of small presecretory proteins. The SEC61 channel is also involved in ER membrane insertion of transmembrane proteins: it mediates membrane insertion of the first few transmembrane segments of proteins, while insertion of subsequent transmembrane regions of multi-pass membrane proteins is mediated by the multi-pass translocon (MPT) complex. The SEC61 channel cooperates with the translocating protein TRAM1 to import nascent proteins into the ER. Controls the passive efflux of calcium ions from the ER lumen to the cytosol through SEC61 channel, contributing to the maintenance of cellular calcium homeostasis. Plays a critical role in nephrogenesis, specifically at pronephros stage. This is Protein transport protein Sec61 subunit alpha isoform 1 (SEC61A1) from Canis lupus familiaris (Dog).